A 177-amino-acid polypeptide reads, in one-letter code: MSSTRAAIRYAKAIIEIATSKNAANEVSNDMFLIATTINSNSELDTFIQNPTIKVEAKENALLEVFANTNEVTKSLFHLLFENKRFEILGAIASEYNKLFDEINGIQVAKVTTAIAMDANLEAKVKAKIATFSDKKVTIENTVDASIIGGFILRIGDKQYNASVANRLQVLKRELSN.

This sequence belongs to the ATPase delta chain family. In terms of assembly, F-type ATPases have 2 components, F(1) - the catalytic core - and F(0) - the membrane proton channel. F(1) has five subunits: alpha(3), beta(3), gamma(1), delta(1), epsilon(1). F(0) has three main subunits: a(1), b(2) and c(10-14). The alpha and beta chains form an alternating ring which encloses part of the gamma chain. F(1) is attached to F(0) by a central stalk formed by the gamma and epsilon chains, while a peripheral stalk is formed by the delta and b chains.

The protein resides in the cell inner membrane. Its function is as follows. F(1)F(0) ATP synthase produces ATP from ADP in the presence of a proton or sodium gradient. F-type ATPases consist of two structural domains, F(1) containing the extramembraneous catalytic core and F(0) containing the membrane proton channel, linked together by a central stalk and a peripheral stalk. During catalysis, ATP synthesis in the catalytic domain of F(1) is coupled via a rotary mechanism of the central stalk subunits to proton translocation. Functionally, this protein is part of the stalk that links CF(0) to CF(1). It either transmits conformational changes from CF(0) to CF(1) or is implicated in proton conduction. The protein is ATP synthase subunit delta of Flavobacterium psychrophilum (strain ATCC 49511 / DSM 21280 / CIP 103535 / JIP02/86).